The sequence spans 1470 residues: ABC transporter G family member 48 (1470 aa).

The tract at residues 1 to 47 is disordered; it reads MAAAPSASGRRSMSWGSSISQSFRQAEADDPFGRAASQQGHDDDEEN. A compositionally biased stretch (polar residues) spans 9-24; it reads GRRSMSWGSSISQSFR. The 274-residue stretch at 172–445 folds into the ABC transporter 1 domain; it reads GLIGRFGSSN…FENAGFRCPE (274 aa). 205–212 is an ATP binding site; that stretch reads GPPSSGKS. Positions 523-736 constitute an ABC transmembrane type-2 1 domain; sequence ESLRAVMSRE…SQQAISINEF (214 aa). 6 helical membrane-spanning segments follow: residues 541–561, 577–597, 629–649, 660–680, 686–706, and 772–792; these read FIYI…MTVF, FLGA…AELQ, VPVS…VMGF, FIAF…LGAI, VANT…GFLI, and FWIS…LYIL. The disordered stretch occupies residues 828 to 852; it reads QIVHNNGASNTSATSSIPMSGSRST. Residues 832–843 show a composition bias toward low complexity; it reads NNGASNTSATSS. Residues 869–1121 enclose the ABC transporter 2 domain; sequence LCFNHVNYYV…KLVEYFEAVP (253 aa). Position 914–921 (914–921) interacts with ATP; it reads GVSGAGKT. Positions 1194–1408 constitute an ABC transmembrane type-2 2 domain; the sequence is SQCIANFWKQ…TIYGVVASQF (215 aa). Transmembrane regions (helical) follow at residues 1215 to 1234, 1249 to 1271, 1301 to 1321, 1331 to 1351, 1359 to 1379, 1389 to 1409, and 1439 to 1459; these read AMRY…VFWQ, LGAT…QPVV, VIYN…MIGY, FMFF…MLVA, ANIL…FLVV, WYYW…SQFG, and FLGY…FIFG.

This sequence belongs to the ABC transporter superfamily. ABCG family. PDR (TC 3.A.1.205) subfamily.

The protein resides in the membrane. May be a general defense protein. The polypeptide is ABC transporter G family member 48 (Oryza sativa subsp. japonica (Rice)).